We begin with the raw amino-acid sequence, 458 residues long: Histidine--tRNA ligase (458 aa).

Belongs to the class-II aminoacyl-tRNA synthetase family. In terms of assembly, homodimer.

The protein localises to the cytoplasm. It carries out the reaction tRNA(His) + L-histidine + ATP = L-histidyl-tRNA(His) + AMP + diphosphate + H(+). The chain is Histidine--tRNA ligase from Azobacteroides pseudotrichonymphae genomovar. CFP2.